Consider the following 542-residue polypeptide: Mitochondrial distribution and morphology protein 34 (542 aa).

An SMP-LTD domain is found at 1-216; that stretch reads MSFRFNKGAF…LPSVIFSMSQ (216 aa). Disordered regions lie at residues 27–58 and 372–435; these read LNSKTQSSSQTAPANTTNSAATDEVKQETRGP and SSGD…TTAV. The segment covering 31–48 has biased composition (low complexity); the sequence is TQSSSQTAPANTTNSAAT. Positions 49 to 58 are enriched in basic and acidic residues; it reads DEVKQETRGP. Positions 379 to 394 are enriched in basic residues; sequence IRRRKIKMGKKSKSKK. Low complexity predominate over residues 403 to 414; it reads SSPTVVMPSSPS.

It belongs to the MDM34 family. As to quaternary structure, component of the ER-mitochondria encounter structure (ERMES) or MDM complex, composed of MMM1, MDM10, MDM12 and MDM34.

Its subcellular location is the mitochondrion outer membrane. In terms of biological role, component of the ERMES/MDM complex, which serves as a molecular tether to connect the endoplasmic reticulum (ER) and mitochondria. Components of this complex are involved in the control of mitochondrial shape and protein biogenesis, and function in nonvesicular lipid trafficking between the ER and mitochondria. MDM34 is required for the interaction of the ER-resident membrane protein MMM1 and the outer mitochondrial membrane-resident beta-barrel protein MDM10. This chain is Mitochondrial distribution and morphology protein 34, found in Lachancea thermotolerans (strain ATCC 56472 / CBS 6340 / NRRL Y-8284) (Yeast).